The chain runs to 305 residues: MKSDASTSAAPLKGLVGPLRSSEPALALPAVSPAVHLLEEASDLLVVHLDFHAALETCERAWQSLAEEPVSGTIVEVKCSLCVVGIQALAEMDRWREALSWVLRYYQVPEKLPPKVLELCILLYSKMKEPGAVLDVASAWLQDPDNQGLPDYGSLARLHVFRLLLPSGRLSEAEELAVRSAAFSEEQRVEALQAIHLARQQHTQEHTQEHSDSQEPQKLRQEGSFSQKLLSLLMLLRRLWGSVVSHLLSQPFRKGLLAALILCLLILRFDPAAPSSLPFLYQLTQLFRRIQKATLSRLYPLALRD.

The Cytoplasmic segment spans residues 1–246 (MKSDASTSAA…RRLWGSVVSH (246 aa)). A helical; Signal-anchor for type II membrane protein membrane pass occupies residues 247 to 267 (LLSQPFRKGLLAALILCLLIL). The Peroxisomal matrix portion of the chain corresponds to 268–305 (RFDPAAPSSLPFLYQLTQLFRRIQKATLSRLYPLALRD).

It belongs to the peroxin-26 family. In terms of assembly, interacts (via its cytoplasmic domain) with PEX6; interaction is direct and is ATP-dependent. Interacts with PEX1; interaction is indirect and is mediated via interaction with PEX6.

It is found in the peroxisome membrane. Its function is as follows. Peroxisomal docking factor that anchors PEX1 and PEX6 to peroxisome membranes. PEX26 is therefore required for the formation of the PEX1-PEX6 AAA ATPase complex, a complex that mediates the extraction of the PEX5 receptor from peroxisomal membrane. This chain is Peroxisome assembly protein 26, found in Mus musculus (Mouse).